Here is a 159-residue protein sequence, read N- to C-terminus: Cytochrome c-type biogenesis protein CcmE (159 aa).

Residues 1–8 (MNIRRKNR) are Cytoplasmic-facing. Residues 9-29 (LWIACAVLAGLALTIGLVLYA) traverse the membrane as a helical; Signal-anchor for type II membrane protein segment. Over 30–159 (LRSNIDLFYT…PASVYKDPAS (130 aa)) the chain is Periplasmic. Heme-binding residues include H130 and Y134. Over residues 132–147 (ENYTPPEVEKAMEANH) the composition is skewed to basic and acidic residues. A disordered region spans residues 132-159 (ENYTPPEVEKAMEANHRRPASVYKDPAS).

This sequence belongs to the CcmE/CycJ family.

It localises to the cell inner membrane. Its function is as follows. Heme chaperone required for the biogenesis of c-type cytochromes. Transiently binds heme delivered by CcmC and transfers the heme to apo-cytochromes in a process facilitated by CcmF and CcmH. This Escherichia coli (strain 55989 / EAEC) protein is Cytochrome c-type biogenesis protein CcmE.